Here is a 365-residue protein sequence, read N- to C-terminus: Peptide chain release factor 2 (365 aa).

At Gln-251 the chain carries N5-methylglutamine.

This sequence belongs to the prokaryotic/mitochondrial release factor family. In terms of processing, methylated by PrmC. Methylation increases the termination efficiency of RF2.

Its subcellular location is the cytoplasm. Functionally, peptide chain release factor 2 directs the termination of translation in response to the peptide chain termination codons UGA and UAA. The chain is Peptide chain release factor 2 from Campylobacter jejuni subsp. jejuni serotype O:23/36 (strain 81-176).